A 556-amino-acid polypeptide reads, in one-letter code: 2-succinyl-5-enolpyruvyl-6-hydroxy-3-cyclohexene-1-carboxylate synthase (556 aa).

It belongs to the TPP enzyme family. MenD subfamily. Homodimer. Mg(2+) serves as cofactor. It depends on Mn(2+) as a cofactor. Thiamine diphosphate is required as a cofactor.

It catalyses the reaction isochorismate + 2-oxoglutarate + H(+) = 5-enolpyruvoyl-6-hydroxy-2-succinyl-cyclohex-3-ene-1-carboxylate + CO2. It functions in the pathway quinol/quinone metabolism; 1,4-dihydroxy-2-naphthoate biosynthesis; 1,4-dihydroxy-2-naphthoate from chorismate: step 2/7. Its pathway is quinol/quinone metabolism; menaquinone biosynthesis. In terms of biological role, catalyzes the thiamine diphosphate-dependent decarboxylation of 2-oxoglutarate and the subsequent addition of the resulting succinic semialdehyde-thiamine pyrophosphate anion to isochorismate to yield 2-succinyl-5-enolpyruvyl-6-hydroxy-3-cyclohexene-1-carboxylate (SEPHCHC). In Staphylococcus haemolyticus (strain JCSC1435), this protein is 2-succinyl-5-enolpyruvyl-6-hydroxy-3-cyclohexene-1-carboxylate synthase.